The chain runs to 310 residues: Cytochrome f (310 aa).

Residues 1-26 (MNIKLTLLVLISIINLMIIQPIQTLA) form the signal peptide. 4 residues coordinate heme: Phe-27, Cys-47, Cys-50, and His-51. Residues 276-296 (IKGMIVFFFTVTIAQIFFVLK) traverse the membrane as a helical segment.

The protein belongs to the cytochrome f family. The 4 large subunits of the cytochrome b6-f complex are cytochrome b6, subunit IV (17 kDa polypeptide, petD), cytochrome f and the Rieske protein, while the 4 small subunits are PetG, PetL, PetM and PetN. The complex functions as a dimer. It depends on heme as a cofactor.

It localises to the plastid. Its subcellular location is the chloroplast thylakoid membrane. Its function is as follows. Component of the cytochrome b6-f complex, which mediates electron transfer between photosystem II (PSII) and photosystem I (PSI), cyclic electron flow around PSI, and state transitions. The polypeptide is Cytochrome f (Gracilaria tenuistipitata var. liui (Red alga)).